The following is a 2076-amino-acid chain: Protein Ycf2 (2076 aa).

Residue 1458 to 1465 (GSIGTGRS) coordinates ATP.

Belongs to the Ycf2 family.

It is found in the plastid. It localises to the chloroplast stroma. In terms of biological role, probable ATPase of unknown function. Its presence in a non-photosynthetic plant (Epifagus virginiana) and experiments in tobacco indicate that it has an essential function which is probably not related to photosynthesis. The protein is Protein Ycf2 of Acorus calamus (Sweet flag).